Here is a 623-residue protein sequence, read N- to C-terminus: Pentatricopeptide repeat-containing protein At5g15340, mitochondrial (623 aa).

The transit peptide at 1–16 directs the protein to the mitochondrion; that stretch reads MKCLSYQKVRLLLRHC. PPR repeat units follow at residues 42-72, 75-109, 110-144, 145-179, 180-206, 207-237, 243-277, 285-319, 320-346, 350-384, and 385-419; these read RSYLSNALFQFYASSGEMVTAQKLFDEIPLS, DNVDWTTLLSSFSRYGLLVNSMKLFVEMRRKRVEI, DDVSVVCLFGVCAKLEDLGFAQQGHGVAVKMGVLT, SVKVCNALMDMYGKCGLVSEVKRIFEELEEKSVVS, WTVVLDTVVKWEGLERGREVFHEMPER, NAVAWTVMVAGYLGAGFTREVLELLAEMVFR, NFVTLCSMLSACAQSGNLVVGRWVHVYALKKEMMM, DVMVGTALVDMYAKCGNIDSSMNVFRLMRKRNVVT, WNALFSGLAMHGKGRMVIDMFPQMIRE, DDLTFTAVLSACSHSGIVDEGWRCFHSLRFYGLEP, and KVDHYACMVDLLGRAGLIEEAEILMREMPVPPNEV. Residues 420–495 are type E motif; sequence VLGSLLGSCS…IPGLSSIYVN (76 aa). Positions 496-526 are type E(+) motif; sequence DSVHRFSSGDRSHPRTKEIYLKLNEVIERIR. The segment at 527-623 is type DYW motif; the sequence is SAGYVPDVSG…GGSCSCSDYW (97 aa).

This sequence belongs to the PPR family. PCMP-H subfamily.

The protein resides in the mitochondrion. In Arabidopsis thaliana (Mouse-ear cress), this protein is Pentatricopeptide repeat-containing protein At5g15340, mitochondrial (PCMP-H91).